The primary structure comprises 510 residues: Citrate lyase alpha chain (510 aa).

Oligomer with a subunit composition of (alpha,beta,gamma)6.

It is found in the cytoplasm. It carries out the reaction citrate = oxaloacetate + acetate. The catalysed reaction is citrate + acetyl-CoA = (3S)-citryl-CoA + acetate. In terms of biological role, represents a citrate:acetyl-ACP transferase. The protein is Citrate lyase alpha chain (citF) of Escherichia coli (strain K12).